We begin with the raw amino-acid sequence, 72 residues long: Translation initiation factor IF-1 (72 aa).

Residues 1–72 (MAKKDVIELE…TRGRITWRKK (72 aa)) enclose the S1-like domain.

Belongs to the IF-1 family. As to quaternary structure, component of the 30S ribosomal translation pre-initiation complex which assembles on the 30S ribosome in the order IF-2 and IF-3, IF-1 and N-formylmethionyl-tRNA(fMet); mRNA recruitment can occur at any time during PIC assembly.

The protein localises to the cytoplasm. Its function is as follows. One of the essential components for the initiation of protein synthesis. Stabilizes the binding of IF-2 and IF-3 on the 30S subunit to which N-formylmethionyl-tRNA(fMet) subsequently binds. Helps modulate mRNA selection, yielding the 30S pre-initiation complex (PIC). Upon addition of the 50S ribosomal subunit IF-1, IF-2 and IF-3 are released leaving the mature 70S translation initiation complex. The polypeptide is Translation initiation factor IF-1 (Clostridioides difficile (strain 630) (Peptoclostridium difficile)).